The following is a 240-amino-acid chain: Protein GrpE (240 aa).

Disordered stretches follow at residues 1–54 (MSGD…NEAR) and 206–240 (VSMG…DGNG). The span at 215-233 (GASSQPAEAPAADAPAEDS) shows a compositional bias: low complexity.

Belongs to the GrpE family. Homodimer.

It localises to the cytoplasm. In terms of biological role, participates actively in the response to hyperosmotic and heat shock by preventing the aggregation of stress-denatured proteins, in association with DnaK and GrpE. It is the nucleotide exchange factor for DnaK and may function as a thermosensor. Unfolded proteins bind initially to DnaJ; upon interaction with the DnaJ-bound protein, DnaK hydrolyzes its bound ATP, resulting in the formation of a stable complex. GrpE releases ADP from DnaK; ATP binding to DnaK triggers the release of the substrate protein, thus completing the reaction cycle. Several rounds of ATP-dependent interactions between DnaJ, DnaK and GrpE are required for fully efficient folding. The chain is Protein GrpE from Synechococcus sp. (strain WH7803).